Consider the following 338-residue polypeptide: Lipoate-protein ligase A (338 aa).

Residues 29 to 216 enclose the BPL/LPL catalytic domain; the sequence is PATQRVLFLW…AFFAHYGERV (188 aa). ATP is bound by residues R71, 76 to 79, and K134; that span reads GAVF. K134 lines the (R)-lipoate pocket.

The protein belongs to the LplA family. As to quaternary structure, monomer.

It localises to the cytoplasm. It catalyses the reaction L-lysyl-[lipoyl-carrier protein] + (R)-lipoate + ATP = N(6)-[(R)-lipoyl]-L-lysyl-[lipoyl-carrier protein] + AMP + diphosphate + H(+). The protein operates within protein modification; protein lipoylation via exogenous pathway; protein N(6)-(lipoyl)lysine from lipoate: step 1/2. It participates in protein modification; protein lipoylation via exogenous pathway; protein N(6)-(lipoyl)lysine from lipoate: step 2/2. In terms of biological role, catalyzes both the ATP-dependent activation of exogenously supplied lipoate to lipoyl-AMP and the transfer of the activated lipoyl onto the lipoyl domains of lipoate-dependent enzymes. This chain is Lipoate-protein ligase A, found in Salmonella choleraesuis (strain SC-B67).